The sequence spans 218 residues: Carnitine transport permease protein OpuCB (218 aa).

Residues 19-198 (TWQHLFISLS…ILALVVEFAL (180 aa)) form the ABC transmembrane type-1 domain. Transmembrane regions (helical) follow at residues 23 to 43 (LFIS…TGIL), 48 to 68 (PKVA…PSLA), 79 to 101 (VGTL…RNTF), 149 to 169 (VIAW…DFIF), and 179 to 199 (LILG…FALG).

It belongs to the binding-protein-dependent transport system permease family. As to quaternary structure, the complex is composed of two ATP-binding proteins (OpuCA), two transmembrane proteins (OpuCB and OpuCD) and a solute-binding protein (OpuCC).

The protein resides in the cell membrane. Its function is as follows. Part of the ABC transporter complex OpuCABCD involved in carnitine uptake. Probably responsible for the translocation of the substrate across the membrane. Involved, with BetL and GbuABC, in osmoprotection and cryoprotection of Listeria. In Listeria monocytogenes, this protein is Carnitine transport permease protein OpuCB (opuCB).